The chain runs to 629 residues: tRNA uridine 5-carboxymethylaminomethyl modification enzyme MnmG (629 aa).

FAD-binding positions include 14-19, valine 126, and serine 181; that span reads GAGHAG. 273–287 contacts NAD(+); it reads GPRYCPSIEDKVVRF. Residue glutamine 370 coordinates FAD.

It belongs to the MnmG family. Homodimer. Heterotetramer of two MnmE and two MnmG subunits. Requires FAD as cofactor.

The protein resides in the cytoplasm. Its function is as follows. NAD-binding protein involved in the addition of a carboxymethylaminomethyl (cmnm) group at the wobble position (U34) of certain tRNAs, forming tRNA-cmnm(5)s(2)U34. The chain is tRNA uridine 5-carboxymethylaminomethyl modification enzyme MnmG from Bacillus cereus (strain ATCC 10987 / NRS 248).